The primary structure comprises 131 residues: D-ribose pyranase (131 aa).

Catalysis depends on His20, which acts as the Proton donor. Residues Asp28, His98, and 120-122 each bind substrate; that span reads FSN.

The protein belongs to the RbsD / FucU family. RbsD subfamily. In terms of assembly, homodecamer.

The protein resides in the cytoplasm. The catalysed reaction is beta-D-ribopyranose = beta-D-ribofuranose. The protein operates within carbohydrate metabolism; D-ribose degradation; D-ribose 5-phosphate from beta-D-ribopyranose: step 1/2. In terms of biological role, catalyzes the interconversion of beta-pyran and beta-furan forms of D-ribose. The protein is D-ribose pyranase of Petrotoga mobilis (strain DSM 10674 / SJ95).